Here is a 566-residue protein sequence, read N- to C-terminus: Endoglucanase B (566 aa).

Positions 1–30 (MKKRRSSKVILSLAIVVALLAAVEPNAALA) are cleaved as a signal peptide. The Proton donor role is filled by glutamate 177. Glutamate 299 functions as the Nucleophile in the catalytic mechanism.

The protein belongs to the glycosyl hydrolase 5 (cellulase A) family.

It catalyses the reaction Endohydrolysis of (1-&gt;4)-beta-D-glucosidic linkages in cellulose, lichenin and cereal beta-D-glucans.. The protein is Endoglucanase B (celB) of Paenibacillus lautus (Bacillus lautus).